The primary structure comprises 329 residues: Glycerol-3-phosphate dehydrogenase [NAD(P)+] (329 aa).

3 residues coordinate NADPH: W11, R30, and K103. Sn-glycerol 3-phosphate is bound by residues K103, G132, and S134. NADPH is bound at residue A136. Sn-glycerol 3-phosphate is bound by residues K187, D240, S250, R251, and N252. Residue K187 is the Proton acceptor of the active site. R251 provides a ligand contact to NADPH. V275 and E277 together coordinate NADPH.

This sequence belongs to the NAD-dependent glycerol-3-phosphate dehydrogenase family.

Its subcellular location is the cytoplasm. It carries out the reaction sn-glycerol 3-phosphate + NAD(+) = dihydroxyacetone phosphate + NADH + H(+). The enzyme catalyses sn-glycerol 3-phosphate + NADP(+) = dihydroxyacetone phosphate + NADPH + H(+). It participates in membrane lipid metabolism; glycerophospholipid metabolism. Catalyzes the reduction of the glycolytic intermediate dihydroxyacetone phosphate (DHAP) to sn-glycerol 3-phosphate (G3P), the key precursor for phospholipid synthesis. This is Glycerol-3-phosphate dehydrogenase [NAD(P)+] from Dechloromonas aromatica (strain RCB).